An 87-amino-acid chain; its full sequence is Small ribosomal subunit protein bS20 (87 aa).

The disordered stretch occupies residues 1–22 (MANSAGSKKRARQAVKSRAHNG). Residues 7 to 19 (SKKRARQAVKSRA) show a composition bias toward basic residues.

Belongs to the bacterial ribosomal protein bS20 family.

Functionally, binds directly to 16S ribosomal RNA. This chain is Small ribosomal subunit protein bS20, found in Marinomonas sp. (strain MWYL1).